A 346-amino-acid chain; its full sequence is UDP-3-O-acylglucosamine N-acyltransferase (346 aa).

The active-site Proton acceptor is His-253.

Belongs to the transferase hexapeptide repeat family. LpxD subfamily. In terms of assembly, homotrimer.

The catalysed reaction is a UDP-3-O-[(3R)-3-hydroxyacyl]-alpha-D-glucosamine + a (3R)-hydroxyacyl-[ACP] = a UDP-2-N,3-O-bis[(3R)-3-hydroxyacyl]-alpha-D-glucosamine + holo-[ACP] + H(+). Its pathway is bacterial outer membrane biogenesis; LPS lipid A biosynthesis. In terms of biological role, catalyzes the N-acylation of UDP-3-O-acylglucosamine using 3-hydroxyacyl-ACP as the acyl donor. Is involved in the biosynthesis of lipid A, a phosphorylated glycolipid that anchors the lipopolysaccharide to the outer membrane of the cell. In Rickettsia prowazekii (strain Madrid E), this protein is UDP-3-O-acylglucosamine N-acyltransferase.